Here is a 241-residue protein sequence, read N- to C-terminus: Sugar fermentation stimulation protein homolog (241 aa).

It belongs to the SfsA family.

This Yersinia enterocolitica serotype O:8 / biotype 1B (strain NCTC 13174 / 8081) protein is Sugar fermentation stimulation protein homolog.